We begin with the raw amino-acid sequence, 442 residues long: MLSDTICAIASGQINQAISIIRISGPNAFKIMEKIFLGKVGRSMEITFGWIHDDNQKIDQVLVLWFAGNKNFVGEDTVEINAHGGVLNTNLILELILKTKLARLANPGEFSLRAFLNGKIDLVKAQAINDLIHAEVKVQHQAALNQFLGKSSNFIKNLIEKIEEIIGIIEVNIDYPEYDDVEILTSDVLLPRINQLLADFDQLIKIANNSRLIYQGIKTCLVGAPNSGKSSLLNILINENKAIISEIPGTTRDVVEGNFVLDGLLFKLFDTAGIRKTTEKIEQIGIEKSYESIKKADLILHIIDASEKNRQNLDLKAKTRPDQIYLKIYNKSDLLENQEEFKDEILISAKYQKIENLLEKIKSIFAFLGKNKEFVANSFQISQIELGKLAILDAKTSLESGFGPEIAIVDLRIAWKELKTIFGRVDDENLLDSIFSKFCLGK.

R22, E79, and K119 together coordinate (6S)-5-formyl-5,6,7,8-tetrahydrofolate. The region spanning 216-366 (GIKTCLVGAP…LLEKIKSIFA (151 aa)) is the TrmE-type G domain. K(+) is bound at residue N226. GTP contacts are provided by residues 226–231 (NSGKSS), 245–251 (SEIPGTT), and 270–273 (DTAG). S230 contributes to the Mg(2+) binding site. Positions 245, 247, and 250 each coordinate K(+). T251 provides a ligand contact to Mg(2+). Residue K442 coordinates (6S)-5-formyl-5,6,7,8-tetrahydrofolate.

It belongs to the TRAFAC class TrmE-Era-EngA-EngB-Septin-like GTPase superfamily. TrmE GTPase family. As to quaternary structure, homodimer. Heterotetramer of two MnmE and two MnmG subunits. K(+) is required as a cofactor.

Its subcellular location is the cytoplasm. Its function is as follows. Exhibits a very high intrinsic GTPase hydrolysis rate. Involved in the addition of a carboxymethylaminomethyl (cmnm) group at the wobble position (U34) of certain tRNAs, forming tRNA-cmnm(5)s(2)U34. This chain is tRNA modification GTPase MnmE, found in Mesomycoplasma hyopneumoniae (strain J / ATCC 25934 / NCTC 10110) (Mycoplasma hyopneumoniae).